The primary structure comprises 1089 residues: PALM2-AKAP2 fusion protein (1089 aa).

Residues 70–107 are a coiled coil; sequence SEEDEFKVKQLEDNIQRLEQEIQALESEESQISAKEQI. 3 disordered regions span residues 165–194, 210–231, and 289–362; these read SEDANQLRSKQDNCGDSRLEPAASSLSPDH, PGVTSTPHSKDHSSPFYSPSHN, and PAHS…SRDG. The span at 173 to 183 shows a compositional bias: basic and acidic residues; that stretch reads SKQDNCGDSRL. Phosphoserine occurs at positions 315 and 318. The segment covering 317 to 328 has biased composition (basic and acidic residues); sequence PSDRMAEGERAN. A compositionally biased stretch (polar residues) spans 329 to 347; sequence GHSTDQPQDLLGNSLQAPA. Residue Ser348 is modified to Phosphoserine. Low complexity predominate over residues 348-357; it reads SPSSSTSSHC. Residue Lys370 forms a Glycyl lysine isopeptide (Lys-Gly) (interchain with G-Cter in SUMO1); alternate linkage. Residue Lys370 forms a Glycyl lysine isopeptide (Lys-Gly) (interchain with G-Cter in SUMO2); alternate linkage. The disordered stretch occupies residues 429–517; the sequence is KNPGIAAKWW…LSTSQPCTAP (89 aa). A compositionally biased stretch (basic and acidic residues) spans 455–470; that stretch reads LESHRKYKERKEKRAQ. Residues 471 to 508 show a composition bias toward low complexity; sequence QEQLQLQQQQQQQLQQQQLQQQQLQQQQLQQQLQQQQL. Ser553 bears the Phosphoserine mark. Residues 592 to 644 form a disordered region; it reads TVGGTLEDGGTQAAKEQKAPCVSESQSAGAGPANAATQGKEGPYSEPSKRGPL. Phosphoserine is present on residues Ser678, Ser682, and Ser734. A compositionally biased stretch (polar residues) spans 712-749; that stretch reads FSMDNISDSGASNETPSALQENSLADFSLPQTPQTDNP. Disordered stretches follow at residues 712-783, 800-899, and 915-934; these read FSMD…DPLE, EQVD…YFSK, and TQESDVMVGPFKLRSRKQRT. Residue Thr743 is modified to Phosphothreonine. The segment at 782-795 is PKA-RII subunit binding domain; it reads LEYQAGLLVQNAIQ. The span at 801–814 shows a compositional bias: basic and acidic residues; the sequence is QVDKAEAHTSKEGS. Residue Ser847 is modified to Phosphoserine. The segment covering 850–871 has biased composition (basic and acidic residues); sequence QEKRDILPKNLPAEDRALREKG. Positions 928-958 form a coiled coil; it reads RSRKQRTLSMIEEEIRAAQEREEELKRQRQV. 4 positions are modified to phosphoserine: Ser936, Ser964, Ser995, and Ser1002. Residues 946-1021 are disordered; sequence QEREEELKRQ…AAGTQRPKNL (76 aa).

As to expression, highly expressed in lung and weakly in thymus and cerebellum. Little or no expression in liver, heart and cerebral cortex. All isoforms are expressed in lung, but KL2A and KL2B isoforms are the principal isoforms in cerebellum.

Its subcellular location is the apical cell membrane. In terms of biological role, binds to regulatory subunit (RII) of protein kinase A. May be involved in establishing polarity in signaling systems or in integrating PKA-RII isoforms with downstream effectors to capture, amplify and focus diffuse, trans-cellular signals carried by cAMP. Binds tp and modulates the structure of the actin cytoskeleton. The protein is PALM2-AKAP2 fusion protein of Mus musculus (Mouse).